We begin with the raw amino-acid sequence, 503 residues long: Cysteine--tRNA ligase (503 aa).

Position 31 (Cys31) interacts with Zn(2+). Positions 33–43 (PTVYDYAHIGN) match the 'HIGH' region motif. Zn(2+) is bound by residues Cys225, His264, and Glu268. The short motif at 297 to 301 (KMSKS) is the 'KMSKS' region element. Lys300 is a binding site for ATP.

The protein belongs to the class-I aminoacyl-tRNA synthetase family. As to quaternary structure, monomer. Zn(2+) serves as cofactor.

The protein resides in the cytoplasm. The catalysed reaction is tRNA(Cys) + L-cysteine + ATP = L-cysteinyl-tRNA(Cys) + AMP + diphosphate. This chain is Cysteine--tRNA ligase, found in Bartonella tribocorum (strain CIP 105476 / IBS 506).